Reading from the N-terminus, the 158-residue chain is Ribonuclease H (158 aa).

The RNase H type-1 domain occupies Pro2–Asp143. Residues Asp11, Glu49, Asp71, and Asp135 each coordinate Mg(2+).

The protein belongs to the RNase H family. Monomer. The cofactor is Mg(2+).

Its subcellular location is the cytoplasm. It catalyses the reaction Endonucleolytic cleavage to 5'-phosphomonoester.. Functionally, endonuclease that specifically degrades the RNA of RNA-DNA hybrids. The sequence is that of Ribonuclease H from Acidithiobacillus ferrooxidans (strain ATCC 23270 / DSM 14882 / CIP 104768 / NCIMB 8455) (Ferrobacillus ferrooxidans (strain ATCC 23270)).